Here is a 352-residue protein sequence, read N- to C-terminus: Protein RecA (352 aa).

65-72 (GPESSGKT) is an ATP binding site. The disordered stretch occupies residues 333-352 (VKAAANREPVEEVEEADTDI). Positions 343-352 (EEVEEADTDI) are enriched in acidic residues.

This sequence belongs to the RecA family.

It is found in the cytoplasm. In terms of biological role, can catalyze the hydrolysis of ATP in the presence of single-stranded DNA, the ATP-dependent uptake of single-stranded DNA by duplex DNA, and the ATP-dependent hybridization of homologous single-stranded DNAs. It interacts with LexA causing its activation and leading to its autocatalytic cleavage. In Pseudomonas fluorescens, this protein is Protein RecA.